Consider the following 66-residue polypeptide: Scarabaecin (66 aa).

The N-terminal stretch at 1-26 (MKTLTFYTLLLCAALYSNFFDCKAVA) is a signal peptide. A disulfide bridge links Cys-46 with Cys-57.

It localises to the secreted. In terms of biological role, possesses antifungal activity against phytopathogenic fungi such as P.oryzae, R.solani and B.cinerea but not against phytopathogenic bacteria. Shows weak activity against the insect pathogenic fungus B.bassiana and against S.aureus. Binds chitin. The protein is Scarabaecin of Oryctes rhinoceros (Coconut rhinoceros beetle).